A 182-amino-acid polypeptide reads, in one-letter code: Peptidyl-prolyl cis-trans isomerase H (182 aa).

One can recognise a PPIase cyclophilin-type domain in the interval 15-181 (FFDITIGGEP…LDVVISQCGE (167 aa)).

It belongs to the cyclophilin-type PPIase family. PPIase H subfamily.

It localises to the nucleus. It carries out the reaction [protein]-peptidylproline (omega=180) = [protein]-peptidylproline (omega=0). PPIases accelerate the folding of proteins. It catalyzes the cis-trans isomerization of proline imidic peptide bonds in oligopeptides. The polypeptide is Peptidyl-prolyl cis-trans isomerase H (CYP3) (Gibberella zeae (strain ATCC MYA-4620 / CBS 123657 / FGSC 9075 / NRRL 31084 / PH-1) (Wheat head blight fungus)).